We begin with the raw amino-acid sequence, 107 residues long: Class I hydrophobin 3 (107 aa).

Positions 1–18 are cleaved as a signal peptide; sequence MQFKVLAALVIGATLAAA. 4 cysteine pairs are disulfide-bonded: C26-C86, C33-C80, C34-C67, and C87-C100. 2 N-linked (GlcNAc...) asparagine glycosylation sites follow: N35 and N89.

Belongs to the fungal hydrophobin family. In terms of assembly, self-assembles to form functional amyloid fibrils called rodlets. Self-assembly into fibrillar rodlets occurs spontaneously at hydrophobic:hydrophilic interfaces and the rodlets further associate laterally to form amphipathic monolayers.

It is found in the secreted. Its subcellular location is the cell wall. Aerial growth, conidiation, and dispersal of filamentous fungi in the environment rely upon a capability of their secreting small amphipathic proteins called hydrophobins (HPBs) with low sequence identity. Class I can self-assemble into an outermost layer of rodlet bundles on aerial cell surfaces, conferring cellular hydrophobicity that supports fungal growth, development and dispersal; whereas Class II form highly ordered films at water-air interfaces through intermolecular interactions but contribute nothing to the rodlet structure. Pnh3 is a class I hydrophobin that might be involved in the attachment of the hydrophilic wall of hyphae to the hydrophobic surface of wood under inorganic phosphate (Pi)-deficient conditions and enable the mycelium to degrade efficiently the components of wood and to acquire nutrients containing Pi. This chain is Class I hydrophobin 3, found in Pholiota nameko.